Reading from the N-terminus, the 129-residue chain is Glycine cleavage system H protein (129 aa).

The Lipoyl-binding domain maps to 24 to 106 (TYTVGITEHA…YGQGWIFKIK (83 aa)). Lys65 is modified (N6-lipoyllysine).

Belongs to the GcvH family. As to quaternary structure, the glycine cleavage system is composed of four proteins: P, T, L and H. It depends on (R)-lipoate as a cofactor.

In terms of biological role, the glycine cleavage system catalyzes the degradation of glycine. The H protein shuttles the methylamine group of glycine from the P protein to the T protein. This chain is Glycine cleavage system H protein, found in Cronobacter sakazakii (strain ATCC BAA-894) (Enterobacter sakazakii).